A 220-amino-acid chain; its full sequence is Small ribosomal subunit protein uS3c (220 aa).

Positions 39–120 (IRDFIKNYVK…KLIIDIIRIT (82 aa)) constitute a KH type-2 domain.

This sequence belongs to the universal ribosomal protein uS3 family. Part of the 30S ribosomal subunit.

The protein resides in the plastid. In Epifagus virginiana (Beechdrops), this protein is Small ribosomal subunit protein uS3c (rps3).